Here is a 435-residue protein sequence, read N- to C-terminus: Glucoside xylosyltransferase 1 (435 aa).

At 1-6 the chain is on the cytoplasmic side; that stretch reads MRRYLR. A helical; Signal-anchor for type II membrane protein transmembrane segment spans residues 7–29; that stretch reads VVGLCLACGFCSLLYAFSQLAVS. Over 30–435 the chain is Lumenal; sequence LEEGAAVGRR…NRYDTPPKER (406 aa). N-linked (GlcNAc...) asparagine glycosylation is found at N168 and N232.

This sequence belongs to the glycosyltransferase 8 family.

It is found in the membrane. It catalyses the reaction 3-O-(beta-D-glucosyl)-L-seryl-[EGF-like domain protein] + UDP-alpha-D-xylose = 3-O-[alpha-D-xylosyl-(1-&gt;3)-beta-D-glucosyl]-L-seryl-[EGF-like domain protein] + UDP + H(+). Glycosyltransferase which elongates the O-linked glucose attached to EGF-like repeats in the extracellular domain of Notch proteins by catalyzing the addition of xylose. This Rattus norvegicus (Rat) protein is Glucoside xylosyltransferase 1 (Gxylt1).